The primary structure comprises 352 residues: 3-isopropylmalate dehydrogenase (352 aa).

76 to 89 (GPKWENLPHEHKPE) is a binding site for NAD(+). Substrate-binding residues include Arg-96, Arg-106, Arg-134, and Asp-219. Residues Asp-219, Asp-243, and Asp-247 each coordinate Mg(2+). NAD(+) is bound at residue 276-288 (GSAPDIAGQNKAN).

It belongs to the isocitrate and isopropylmalate dehydrogenases family. LeuB type 1 subfamily. Homodimer. Mg(2+) serves as cofactor. Mn(2+) is required as a cofactor.

It localises to the cytoplasm. It catalyses the reaction (2R,3S)-3-isopropylmalate + NAD(+) = 4-methyl-2-oxopentanoate + CO2 + NADH. Its pathway is amino-acid biosynthesis; L-leucine biosynthesis; L-leucine from 3-methyl-2-oxobutanoate: step 3/4. Functionally, catalyzes the oxidation of 3-carboxy-2-hydroxy-4-methylpentanoate (3-isopropylmalate) to 3-carboxy-4-methyl-2-oxopentanoate. The product decarboxylates to 4-methyl-2 oxopentanoate. This Chlorobium chlorochromatii (strain CaD3) protein is 3-isopropylmalate dehydrogenase.